The chain runs to 354 residues: Probable L-ascorbate-6-phosphate lactonase UlaG (354 aa).

This sequence belongs to the UlaG family. Requires a divalent metal cation as cofactor.

It localises to the cytoplasm. It catalyses the reaction L-ascorbate 6-phosphate + H2O = 3-dehydro-L-gulonate 6-phosphate. It functions in the pathway cofactor degradation; L-ascorbate degradation; D-xylulose 5-phosphate from L-ascorbate: step 1/4. In terms of biological role, probably catalyzes the hydrolysis of L-ascorbate-6-P into 3-keto-L-gulonate-6-P. Is essential for L-ascorbate utilization under anaerobic conditions. This is Probable L-ascorbate-6-phosphate lactonase UlaG from Escherichia coli O139:H28 (strain E24377A / ETEC).